Consider the following 321-residue polypeptide: Phospho-N-acetylmuramoyl-pentapeptide-transferase (321 aa).

10 helical membrane passes run 1-21 (MIFVYALLALVITFVLVPVLI), 50-70 (MGGLTFLLSIVITSLVVIIFV), 76-96 (IILLLFVTIGFGLIGFIDDYI), 112-132 (FLAQIGIAIIFFVLSNVFHLV), 140-160 (IPFTNVAIPLSFAYVIFIVFW), 176-196 (GLATGLSIIGFTMYAIMSFVL), 200-220 (AIGIFCIIMLFALLGFLPYNI), 225-245 (VFMGDTGSLALGGIFATISIM), 250-270 (LSLIFIGLVFVIETLSVMLQV), and 300-320 (VVTVFWAVGLISGLIGLWIGV).

Belongs to the glycosyltransferase 4 family. MraY subfamily. Mg(2+) is required as a cofactor.

It localises to the cell membrane. The enzyme catalyses UDP-N-acetyl-alpha-D-muramoyl-L-alanyl-gamma-D-glutamyl-L-lysyl-D-alanyl-D-alanine + di-trans,octa-cis-undecaprenyl phosphate = Mur2Ac(oyl-L-Ala-gamma-D-Glu-L-Lys-D-Ala-D-Ala)-di-trans,octa-cis-undecaprenyl diphosphate + UMP. The protein operates within cell wall biogenesis; peptidoglycan biosynthesis. Catalyzes the initial step of the lipid cycle reactions in the biosynthesis of the cell wall peptidoglycan: transfers peptidoglycan precursor phospho-MurNAc-pentapeptide from UDP-MurNAc-pentapeptide onto the lipid carrier undecaprenyl phosphate, yielding undecaprenyl-pyrophosphoryl-MurNAc-pentapeptide, known as lipid I. This is Phospho-N-acetylmuramoyl-pentapeptide-transferase from Staphylococcus aureus (strain MSSA476).